A 183-amino-acid chain; its full sequence is MKGLVLSFALVALSALCVYGDVPIQPDFQEDKILGKWYGIGLASNSNWFQSKKQQLKMCTTVITPTADGNLDVVATFPKLDRCEKKSMTYIKTEQPGRFLSKSPRYGSDHVIRVVESNYDEYTLMHTIKTKGNEVNTIVSLFGRRKTLSPELLDKFQQFAKEQGLTDDNILILPQTDSCMSEV.

The signal sequence occupies residues 1 to 20 (MKGLVLSFALVALSALCVYG). An intrachain disulfide couples Cys-83 to Cys-179.

The protein belongs to the calycin superfamily. Lipocalin family. As to quaternary structure, monomer. Expressed mainly in choroid plexus. Much lower expression in other brain areas, and absent from liver.

It is found in the secreted. Its function is as follows. Might have a transport function across the blood brain barrier. Is supposed to have similar functions as a transthyretin which must have evolved after the stage of the amphibians in evolution. The chain is Lipocalin from Rhinella marina (Cane toad).